The following is a 310-amino-acid chain: Thiamine-monophosphate kinase (310 aa).

Residues D24, T38, and D39 each contribute to the Mg(2+) site. Position 46 (D46) interacts with substrate. Mg(2+) is bound by residues D67 and D115. Residues 114–115 and R138 contribute to the ATP site; that span reads GD. Mg(2+) is bound at residue D203. S205 contributes to the ATP binding site. D206 contacts Mg(2+). Substrate is bound by residues E251 and W306.

Belongs to the thiamine-monophosphate kinase family.

The catalysed reaction is thiamine phosphate + ATP = thiamine diphosphate + ADP. The protein operates within cofactor biosynthesis; thiamine diphosphate biosynthesis; thiamine diphosphate from thiamine phosphate: step 1/1. Functionally, catalyzes the ATP-dependent phosphorylation of thiamine-monophosphate (TMP) to form thiamine-pyrophosphate (TPP), the active form of vitamin B1. The protein is Thiamine-monophosphate kinase of Nitrosopumilus maritimus (strain SCM1).